Consider the following 670-residue polypeptide: Sodium/glucose cotransporter 2 (670 aa).

At 1 to 20 (MEGHVEEGSELGEQKVLIDN) the chain is on the extracellular side. A helical transmembrane segment spans residues 21–42 (PADILVIAAYFLLVIGVGLWSM). At 43-61 (FRTNRGTVGGYFLAGRSMV) the chain is on the cytoplasmic side. Residues 62–83 (WWPVGASLFASNIGSGHFVGLA) traverse the membrane as a helical segment. Ala71 and Ile74 together coordinate Na(+). Topologically, residues 84–91 (GTGAASGL) are extracellular. The helical transmembrane segment at 92–112 (AVAGFEWNALFVVLLLGWLFV) threads the bilayer. Over 113–134 (PVYLTAGVITMPQYLRKRFGGR) the chain is Cytoplasmic. The chain crosses the membrane as a helical span at residues 135–164 (RIRLYLSVLSLFLYIFTKISVDMFSGAVFI). Over 165 to 171 (QQALGWN) the chain is Extracellular. The next 2 helical transmembrane spans lie at 172 to 193 (IYASVIALLGITMIYTVTGGLA) and 194 to 215 (ALMYTDTVQTFVILAGAFILTG). Residues 216-273 (YAFHEVGGYSGLFDKYLGAVTSLTVSKDPAVGNISSTCYQPRPDSYHLLRDPVTGGLP) lie on the Extracellular side of the membrane. Residue Asn248 is glycosylated (N-linked (GlcNAc...) asparagine). 4 disulfide bridges follow: Cys253–Cys509, Cys343–Cys349, Cys353–Cys359, and Cys515–Cys520. A helical membrane pass occupies residues 274 to 293 (WPALLLGLTIVSGWHWCSDQ). Residues 294–307 (VIVQRCLAGKNLTH) are Cytoplasmic-facing. The chain crosses the membrane as a helical span at residues 308 to 329 (IKAGCILCGYLKLMPMFLMVMP). Residues 330–373 (GMISRILYPDEVACVVPEVCKRVCGTEVGCSNIAYPRLVVKLMP) are Extracellular-facing. The chain crosses the membrane as a helical span at residues 374–404 (NGLRGLMLAVMLAALMSSLASIFNSSSTLFT). Na(+)-binding residues include Ala387, Ser390, and Ser391. At 405-422 (MDIYTRLRPRAGDRELLL) the chain is on the cytoplasmic side. Residues 423-444 (VGRLWVVFIVAVSVAWLPVVQA) traverse the membrane as a helical segment. The Extracellular segment spans residues 445–449 (AQGGQ). Residues 450–475 (LFDYIQSVSSYLAPPVSAVFVLALFV) traverse the membrane as a helical segment. Over 476–480 (PRVNE) the chain is Cytoplasmic. The chain crosses the membrane as a helical span at residues 481 to 503 (KGAFWGLIGGLLMGLARLIPEFF). The Extracellular portion of the chain corresponds to 504 to 521 (FGTGSCVRPSACPAIFCR). The helical transmembrane segment at 522-545 (VHYLYFAIILFFCSGFLTLAISRC) threads the bilayer. At 546–649 (TAPIPQKHLH…DISEDPSWAR (104 aa)) the chain is on the cytoplasmic side. Residues 650–668 (VVNLNALLMMTVAVFLWGF) traverse the membrane as a helical segment. Topologically, residues 669-670 (YA) are extracellular.

Belongs to the sodium:solute symporter (SSF) (TC 2.A.21) family. As to quaternary structure, forms a heterodimer (via TM13) with PDZK1IP1 (via N-terminal transmembrane helix); this interaction enhances SLC5A2 transporter activity. In terms of processing, glycosylated at a single site. As to expression, kidney, in proximal tubule S1 segments.

It is found in the apical cell membrane. It carries out the reaction D-glucose(out) + Na(+)(out) = D-glucose(in) + Na(+)(in). With respect to regulation, enhanced by the interaction with PDZK1IP1/MAP17. Functionally, electrogenic Na(+)-coupled sugar symporter that actively transports D-glucose at the plasma membrane, with a Na(+) to sugar coupling ratio of 1:1. Transporter activity is driven by a transmembrane Na(+) electrochemical gradient set by the Na(+)/K(+) pump. Unlike SLC5A1/SGLT1, requires the auxiliary protein PDZK1IP1/MAP17 for full transporter activity. Has a primary role in D-glucose reabsorption from glomerular filtrate across the brush border of the early proximal tubules of the kidney. The protein is Sodium/glucose cotransporter 2 (Slc5a2) of Rattus norvegicus (Rat).